A 154-amino-acid chain; its full sequence is Metallothiol transferase FosB (154 aa).

Positions 8–123 (GINHLLFSVS…DGHKFELHTG (116 aa)) constitute a VOC domain. Mg(2+) is bound by residues His-11, His-70, and Glu-119. Catalysis depends on Glu-119, which acts as the Proton donor/acceptor.

It belongs to the fosfomycin resistance protein family. FosB subfamily. As to quaternary structure, homodimer. Mg(2+) serves as cofactor.

It localises to the cytoplasm. Its function is as follows. Metallothiol transferase which confers resistance to fosfomycin by catalyzing the addition of a thiol cofactor to fosfomycin. L-cysteine is probably the physiological thiol donor. This chain is Metallothiol transferase FosB, found in Bacillus licheniformis (strain ATCC 14580 / DSM 13 / JCM 2505 / CCUG 7422 / NBRC 12200 / NCIMB 9375 / NCTC 10341 / NRRL NRS-1264 / Gibson 46).